Reading from the N-terminus, the 257-residue chain is Asnovolin H dehydrogenase nvfC (257 aa).

The chain crosses the membrane as a helical span at residues 7–26 (YVLIITGSASGIGLATATIA). I11 is an NADP(+) binding site. N-linked (GlcNAc...) asparagine glycans are attached at residues N57, N92, and N110. The NADP(+) site is built by R119, Y151, K155, and V184. Y151 acts as the Proton donor in catalysis. K155 serves as the catalytic Lowers pKa of active site Tyr.

Belongs to the short-chain dehydrogenases/reductases (SDR) family.

It localises to the membrane. The catalysed reaction is asnovolin H + A = chermesin D + AH2. Its pathway is secondary metabolite biosynthesis; terpenoid biosynthesis. Its function is as follows. Short chain dehydrogenase; part of the gene cluster that mediates the biosynthesis of novofumigatonin, a heavily oxygenated meroterpenoid containing a unique orthoester moiety. The first step of the pathway is the synthesis of 3,5-dimethylorsellinic acid (DMOA) by the polyketide synthase nvfA via condensation of one acetyl-CoA starter unit with 3 malonyl-CoA units and 2 methylations. DMOA is then converted to farnesyl-DMOA by the farnesyltransferase nvfB. Epoxydation by FAD-dependent monooxygenase nvfK, followed by a protonation-initiated cyclization catalyzed by the terpene cyclase nvfL leads to the production of asnavolin H. The short chain dehydrogenase nvfC then as a 3-OH dehydrogenase of asnovolin H to yield chemesin D. There are two branches to synthesize asnovolin A from chemesin D. In one branch, chemesin D undergoes Baeyer-Villiger oxidation by nvfH, methylation by nvfJ, and enoyl reduction by the nvfM D enoylreductase that reduces the double bond between C-5'and C-6', to form respectively asnovolin I, asnovolin K, and asnovolin A. In the other branch, the methylation precedes the Baeyer-Villiger oxidation and the enoyl reduction to yield asnovolin A via the asnovolin J intermediate. Asnovolin A is further converted to fumigatonoid A by the Fe(II)/2-oxoglutarate-dependent dioxygenase nvfI that catalyzes an endoperoxidation reaction. The alpha/beta hydrolase nvfD then acts as an epimerase that converts fumigatonoid A to its C-5' epimer, which then undergoes spontaneous or nvfD-catalyzed lactonization. The following step utilizes the ketoreductase nvfG to produce fumigatonoid B. The dioxygenase nvfE further converts fumigatonoid B into fumigatonoid C. Finally the Fe(II)/2-oxoglutarate-dependent dioxygenase nvfF catalyzes two rounds of oxidation to transform fumigatonoid C into the end product, novofumigatonin A. In Aspergillus novofumigatus (strain IBT 16806), this protein is Asnovolin H dehydrogenase nvfC.